The primary structure comprises 292 residues: Tissue factor (292 aa).

Residues 1-32 form the signal peptide; the sequence is MAPPTRLQVPRPGTAVPYTVLLGWLLAQVARA. At 33–250 the chain is on the extracellular side; sequence ADTTGRAYNL…SREQGRAREM (218 aa). 2 Fibronectin type-III domains span residues 35–126 and 148–240; these read TTGR…PFRN and QVGT…TECT. Asparagine 41 is a glycosylation site (N-linked (GlcNAc...) asparagine). 2 consecutive short sequence motifs (WKS motif) follow at residues 44–46 and 75–77; these read WKS. Cysteines 79 and 87 form a disulfide. N-linked (GlcNAc...) asparagine glycans are attached at residues asparagine 114, asparagine 154, asparagine 167, and asparagine 182. A disulfide bond links cysteine 216 and cysteine 239. The chain crosses the membrane as a helical span at residues 251 to 271; sequence FFIIGAVVVVALLIIVLSVTV. Residues 272 to 292 lie on the Cytoplasmic side of the membrane; it reads YKCRKARAGPSGKESSPLNIA. Cysteine 274 carries S-palmitoyl cysteine lipidation.

The protein belongs to the tissue factor family. Interacts with HSPE; the interaction, inhibited by heparin, promotes the generation of activated factor X and activates coagulation in the presence of activated factor VII. As to expression, brain, heart.

It localises to the membrane. Its function is as follows. Initiates blood coagulation by forming a complex with circulating factor VII or VIIa. The [TF:VIIa] complex activates factors IX or X by specific limited proteolysis. TF plays a role in normal hemostasis by initiating the cell-surface assembly and propagation of the coagulation protease cascade. In Oryctolagus cuniculus (Rabbit), this protein is Tissue factor (F3).